The following is a 91-amino-acid chain: Cell division protein ZapA (91 aa).

Residues 58–91 (LTAVNIASEYLKLKEEYNRLREQLKKEKDGERDD) are a coiled coil.

It belongs to the ZapA family. Type 2 subfamily. In terms of assembly, homodimer. Interacts with FtsZ.

The protein resides in the cytoplasm. In terms of biological role, activator of cell division through the inhibition of FtsZ GTPase activity, therefore promoting FtsZ assembly into bundles of protofilaments necessary for the formation of the division Z ring. It is recruited early at mid-cell but it is not essential for cell division. This chain is Cell division protein ZapA, found in Geobacillus kaustophilus (strain HTA426).